A 559-amino-acid polypeptide reads, in one-letter code: Phosphoinositide 3-phosphatase (559 aa).

In terms of domain architecture, Myotubularin phosphatase spans 120–541; it reads SWKSFLLENE…SSLRWWSASF (422 aa). C342 acts as the Phosphocysteine intermediate in catalysis.

Belongs to the protein-tyrosine phosphatase family. Non-receptor class myotubularin subfamily.

The protein resides in the cytoplasm. It catalyses the reaction a 1,2-diacyl-sn-glycero-3-phospho-(1D-myo-inositol-3-phosphate) + H2O = a 1,2-diacyl-sn-glycero-3-phospho-(1D-myo-inositol) + phosphate. Lipid phosphatase which dephosphorylates phosphatidylinositol 3-monophosphate (PI3P). Involved in the control of PI3P-dependent signaling and in the maintenance of endosomal system integrity. In Schizosaccharomyces pombe (strain 972 / ATCC 24843) (Fission yeast), this protein is Phosphoinositide 3-phosphatase.